A 104-amino-acid chain; its full sequence is Transcription factor ILI1 (104 aa).

Residues 1-11 show a composition bias toward basic residues; sequence MSSSRRSRSRR. Residues 1–27 form a disordered region; the sequence is MSSSRRSRSRRAGSSVPSSSSSSRTSI. Low complexity predominate over residues 12–27; that stretch reads AGSSVPSSSSSSRTSI. The 56-residue stretch at 16-71 folds into the bHLH domain; sequence VPSSSSSSRTSISEDQIAELLSKLQALLPESQARNGAHRGSAARVLQETCSYIRSL.

This sequence belongs to the bHLH protein family. Interacts with IBH1.

In terms of biological role, atypical and probable non DNA-binding bHLH transcription factor that acts as a positive regulator of cell elongation and plant development. Binds the transcription repressor IBH1 and forms a heterodimer of antagonistic bHLH transcription factors that function downstream of BZR1 to mediate brassinosteroid regulation of cell elongation and lamina inclination. The chain is Transcription factor ILI1 (ILI1) from Oryza sativa subsp. indica (Rice).